Consider the following 244-residue polypeptide: 3-deoxy-manno-octulosonate cytidylyltransferase (244 aa).

It belongs to the KdsB family.

It localises to the cytoplasm. The enzyme catalyses 3-deoxy-alpha-D-manno-oct-2-ulosonate + CTP = CMP-3-deoxy-beta-D-manno-octulosonate + diphosphate. The protein operates within nucleotide-sugar biosynthesis; CMP-3-deoxy-D-manno-octulosonate biosynthesis; CMP-3-deoxy-D-manno-octulosonate from 3-deoxy-D-manno-octulosonate and CTP: step 1/1. Its pathway is bacterial outer membrane biogenesis; lipopolysaccharide biosynthesis. Functionally, activates KDO (a required 8-carbon sugar) for incorporation into bacterial lipopolysaccharide in Gram-negative bacteria. The polypeptide is 3-deoxy-manno-octulosonate cytidylyltransferase (Synechococcus elongatus (strain ATCC 33912 / PCC 7942 / FACHB-805) (Anacystis nidulans R2)).